A 344-amino-acid chain; its full sequence is Intraflagellar transport protein 46 (344 aa).

A compositionally biased stretch (acidic residues) spans 1–16 (MDDSMDYPDRDGDDLD). The segment at 1-100 (MDDSMDYPDR…IANSDEAPPG (100 aa)) is disordered. A compositionally biased stretch (polar residues) spans 18–30 (FQGTARSQVVQNQ).

It belongs to the IFT46 family. In terms of assembly, component of the IFT complex B, the core composed of IFT25, IFT27, IFT46, IFT52, IFT74, IFT81 and IFT88 as well as associated subunits IFT20, IFT57, IFT80 and IFT172. Interacts with IFT25, IFT52, IFT70, IFT88 and DAW1.

Its subcellular location is the cytoplasm. It is found in the cytoskeleton. It localises to the cilium basal body. The protein localises to the cell projection. The protein resides in the cilium. Its function is as follows. Forms part of a complex involved in intraflagellar transport (IFT), the bi-directional movement of particles required for the assembly, maintenance and functioning of primary cilia. Plays a role in maintaining IFT complex B stability. The polypeptide is Intraflagellar transport protein 46 (Chlamydomonas reinhardtii (Chlamydomonas smithii)).